The sequence spans 235 residues: Fibrillarin-like rRNA/tRNA 2'-O-methyltransferase (235 aa).

S-adenosyl-L-methionine-binding positions include 91–92, 110–111, 137–138, and 157–160; these read TT, EF, DA, and DVAQ.

It belongs to the methyltransferase superfamily. Fibrillarin family. In terms of assembly, interacts with nop5. Component of box C/D small ribonucleoprotein (sRNP) particles that contain rpl7ae, FlpA and nop5, plus a guide RNA.

Its function is as follows. Involved in pre-rRNA and tRNA processing. Utilizes the methyl donor S-adenosyl-L-methionine to catalyze the site-specific 2'-hydroxyl methylation of ribose moieties in rRNA and tRNA. Site specificity is provided by a guide RNA that base pairs with the substrate. Methylation occurs at a characteristic distance from the sequence involved in base pairing with the guide RNA. The chain is Fibrillarin-like rRNA/tRNA 2'-O-methyltransferase from Pyrobaculum aerophilum (strain ATCC 51768 / DSM 7523 / JCM 9630 / CIP 104966 / NBRC 100827 / IM2).